Here is a 584-residue protein sequence, read N- to C-terminus: Membrane frizzled-related protein (584 aa).

Residues 1–69 (MKDYDDVILR…QPDCHFSWFC (69 aa)) are Cytoplasmic-facing. Residues 70–90 (ILLLSGLLLLLLGLLVAVILA) traverse the membrane as a helical; Signal-anchor for type II membrane protein segment. At 91 to 584 (QLQATSLPRT…AASLEACSQP (494 aa)) the chain is on the extracellular side. Positions 108-140 (RGLTPMGVIPSTTPNTTTTTTTTTPARTGQQEA) are disordered. Residues 119 to 132 (TTPNTTTTTTTTTP) are compositionally biased toward low complexity. 2 disulfides stabilise this stretch: Cys-150–Cys-176 and Cys-203–Cys-222. The CUB 1 domain occupies 150–259 (CGGLLPGPSG…SGFQAWYQAV (110 aa)). N-linked (GlcNAc...) asparagine glycosylation occurs at Asn-233. An LDL-receptor class A 1 domain is found at 265–301 (SCAHNEFHCDLLLCLKRDSVCDGITECADGSDEANCS). Disulfide bonds link Cys-266-Cys-278, Cys-273-Cys-291, Cys-285-Cys-300, Cys-307-Cys-333, and Cys-360-Cys-383. The CUB 2 domain occupies 307-420 (CGGNLTGLYG…GGFLATYQAI (114 aa)). Asn-421 carries an N-linked (GlcNAc...) asparagine glycan. Residues 426 to 460 (GCPWAEFCQSGGYRDLQWMCDLWKDCANDSNDNCS) enclose the LDL-receptor class A 2 domain. Intrachain disulfides connect Cys-433–Cys-451, Cys-445–Cys-459, Cys-471–Cys-533, Cys-479–Cys-526, Cys-517–Cys-554, Cys-543–Cys-581, and Cys-547–Cys-569. An N-linked (GlcNAc...) asparagine glycan is attached at Asn-458. The FZ domain occupies 466–584 (QPDLTCEPVQ…AASLEACSQP (119 aa)).

As to quaternary structure, interacts with C1QTNF5. Expressed in retinal pigment epithelium and ciliary epithelium of the eye.

It is found in the apical cell membrane. In terms of biological role, may play a role in eye development. In Mus musculus (Mouse), this protein is Membrane frizzled-related protein (Mfrp).